Consider the following 54-residue polypeptide: Apelin receptor early endogenous ligand (54 aa).

The first 23 residues, 1–23 (MRFQPLFWVFFIFAMSLLFISEQ), serve as a signal peptide directing secretion.

Belongs to the Elabela/Toddler family. As to quaternary structure, interacts with APLNR. As to expression, expressed in the placenta. Expressed in syncytiotrophoblasts of the placenta labyrinth at 10.5 dpc. Expressed in placental chorionic trophoblasts (at protein level). Expressed in a small population of epiblast cells in the distal half of the embryo at 7 dpc. Expressed in newly formed definitive endoderm cells in the proximal half of the embryo, while it is not present in extra-embryonic endoderm at 7.5 dpc. This expression pattern then changes to the ventral aspect of the developing foregut pocket and the entire hindgut pocket at 8.5 dpc, before becoming restricted to the foregut overlying the heart and the posterior-most hindgut. Not detected in endothelial precursor cells of the yolk sac at 8 dpc. Expressed in extraembryonic tissues as well as in the chorion at 8.25 dpc. Expressed in endometrial stroma of the uterus of pregnant mice at 8.5 dpc. Expressed in the developing heart, caudal neural tube and trophobasts at 9 dpc. Expressed in the chorionic plate of the chorioallantoic placenta at 9 dpc. Expressed in the posterior half of the ventral neural tube at 9.25 dpc. Expressed in trophoblast cells at the periphery of the placenta at 9.5 dpc. Expressed in collecting ducts of the kidney of pregnant mice at 10.5 dpc. Expressed in the epicardium of the developing heart at 11.5 dpc. Expressed weakly in the adult heart. Expressed in endothelial cells and fibroblasts and weakly in cardiomyocytes.

It is found in the secreted. The protein resides in the extracellular space. Functionally, peptide hormone that functions as endogenous ligand for the G-protein-coupled apelin receptor (APLNR/APJ), that plays a role in the regulation of normal cardiovascular function and fluid homeostasis. Functions as a balanced agonist activating both G(i) protein pathway and beta-arrestin pathway of APLNR. Downstream G proteins activation, apelin can inhibit cAMP production and activate key intracellular effectors such as ERKs. On the other hand, APLNR activation induces beta-arrestin recruitment to the membrane leading to desensitization and internalization of the receptor. Required for mesendodermal differentiation, blood vessels formation and heart morphogenesis during early development and for adult cardiovascular homeostasis. Acts as a motogen by promoting mesendodermal cell migration during gastrulation by binding and activating APLNR. Acts as an early embryonic regulator of cellular movement with a role in migration and development of cardiac progenitor cells. May act as a chemoattractant for the activation of angioblast migration toward the embryonic midline, i.e. the position of the future vessel formation, during vasculogenesis. Positively regulates sinus venosus (SV)-derived endothelial cells migration into the developing heart to promote coronary blood vessel sprouting. Plays a role in placental vascular development; promotes placental trophoblast invasion and spiral artery remodeling in the uterus. Involved in the regulation of maternal cardiovascular homeostasis to prevent gestational hypertension and for potent cardioprotective functions during heart failure. Mediates myocardial contractility in an ERK1/2-dependent manner. In Mus musculus (Mouse), this protein is Apelin receptor early endogenous ligand.